Reading from the N-terminus, the 439-residue chain is Xylose isomerase (439 aa).

Active-site residues include histidine 101 and aspartate 104. Mg(2+)-binding residues include glutamate 232, glutamate 268, histidine 271, aspartate 296, aspartate 307, aspartate 309, and aspartate 339.

Belongs to the xylose isomerase family. Homotetramer. The cofactor is Mg(2+).

The protein resides in the cytoplasm. It carries out the reaction alpha-D-xylose = alpha-D-xylulofuranose. This Pseudoalteromonas atlantica (strain T6c / ATCC BAA-1087) protein is Xylose isomerase.